The chain runs to 50 residues: Protein hunchback (50 aa).

3 consecutive C2H2-type zinc fingers follow at residues 1–5 (HILKH), 11–33 (IRCPECNYTCVNRSMLTSHMKSH), and 39–50 (YRCLDCNYATKY).

It belongs to the hunchback C2H2-type zinc-finger protein family.

The protein resides in the nucleus. Its function is as follows. Gap class segmentation protein that controls development of head structures. This is Protein hunchback (hb) from Bradysia coprophila (Dark-winged fungus gnat).